A 122-amino-acid polypeptide reads, in one-letter code: Large ribosomal subunit protein uL14 (122 aa).

The protein belongs to the universal ribosomal protein uL14 family. In terms of assembly, part of the 50S ribosomal subunit. Forms a cluster with proteins L3 and L19. In the 70S ribosome, L14 and L19 interact and together make contacts with the 16S rRNA in bridges B5 and B8.

Its function is as follows. Binds to 23S rRNA. Forms part of two intersubunit bridges in the 70S ribosome. This is Large ribosomal subunit protein uL14 from Thermoanaerobacter pseudethanolicus (strain ATCC 33223 / 39E) (Clostridium thermohydrosulfuricum).